A 326-amino-acid chain; its full sequence is Malate dehydrogenase (326 aa).

12–18 (GGTGQIA) is a binding site for NAD(+). Substrate-binding residues include Arg-93 and Arg-99. Residues Asn-106, Gln-113, and 130-132 (VGN) each bind NAD(+). Residues Asn-132 and Arg-163 each coordinate substrate. His-188 (proton acceptor) is an active-site residue.

Belongs to the LDH/MDH superfamily. MDH type 2 family.

It carries out the reaction (S)-malate + NAD(+) = oxaloacetate + NADH + H(+). Its function is as follows. Catalyzes the reversible oxidation of malate to oxaloacetate. The protein is Malate dehydrogenase of Chlamydia trachomatis serovar L2 (strain ATCC VR-902B / DSM 19102 / 434/Bu).